The following is a 72-amino-acid chain: Neuropeptide IMFamide (72 aa).

An N-terminal signal peptide occupies residues 1–24; that stretch reads MMRFTIGVVCLVAVLLSLAEVSEA. A Phenylalanine amide modification is found at Phe36. A propeptide spanning residues 40-72 is cleaved from the precursor; it reads GPTEYDQRGKTFTALCEIATEACQAWFPSTENK.

Expressed in corpora cardiaca (CC), corpora allata (CA), antennal lobe (AL) and gnathal ganglion (GNG) (at protein level). Expression detected in only a few animals (at protein level).

It is found in the secreted. This Agrotis ipsilon (Black cutworm moth) protein is Neuropeptide IMFamide.